A 275-amino-acid chain; its full sequence is Interleukin-2 receptor subunit alpha (275 aa).

The signal sequence occupies residues 1-21 (MEPSLLLWGILTFVVVHGHVT). In terms of domain architecture, Sushi 1 spans 22 to 84 (ELCDENPPDI…SWENQCRCIS (63 aa)). The Extracellular segment spans residues 22-243 (ELCDENPPDI…ESFVFTTEYQ (222 aa)). Cystine bridges form between Cys-24-Cys-67, Cys-49-Cys-80, and Cys-51-Cys-82. N-linked (GlcNAc...) asparagine glycosylation is found at Asn-60 and Asn-70. A disordered region spans residues 91–118 (DGQIIPKPEEQKGKSPMGMQSQMQPTDQ). The span at 108–118 (GMQSQMQPTDQ) shows a compositional bias: polar residues. In terms of domain architecture, Sushi 2 spans 123 to 186 (GHCREPPPWE…WTQPRLQCLS (64 aa)). 2 disulfide bridges follow: Cys-125/Cys-168 and Cys-152/Cys-184. The tract at residues 188-213 (RSDGWFPDDEEPQASTDAALGSDTSC) is disordered. Residues 244–262 (IAVAGCVLLLISIVLLSGL) form a helical membrane-spanning segment. At 263–275 (TWQRRWRKSRRTI) the chain is on the cytoplasmic side.

As to quaternary structure, non-covalent dimer of an alpha and a beta subunit. IL2R exists in 3 different forms: a high affinity dimer, an intermediate affinity monomer (beta subunit), and a low affinity monomer (alpha subunit). The high and intermediate affinity forms also associate with a gamma subunit.

The protein resides in the membrane. In terms of biological role, receptor for interleukin-2. The receptor is involved in the regulation of immune tolerance by controlling regulatory T cells (TREGs) activity. TREGs suppress the activation and expansion of autoreactive T-cells. The polypeptide is Interleukin-2 receptor subunit alpha (IL2RA) (Felis catus (Cat)).